A 131-amino-acid polypeptide reads, in one-letter code: Protein Turandot M (131 aa).

Positions 1–23 (MNPTIYLSCLMVFSVFLLGKVNA) are cleaved as a signal peptide.

This sequence belongs to the Turandot family.

Its subcellular location is the secreted. Its function is as follows. A humoral factor that may play a role in stress tolerance. Requires Mekk1 expression in the fat body to regulate response to septic injury and consequent immune response. The protein is Protein Turandot M of Drosophila melanogaster (Fruit fly).